The chain runs to 425 residues: UPF0597 protein UNCMA_16400 (425 aa).

The protein belongs to the UPF0597 family.

In Methanocella arvoryzae (strain DSM 22066 / NBRC 105507 / MRE50), this protein is UPF0597 protein UNCMA_16400.